The chain runs to 408 residues: Myb/SANT-like DNA-binding domain-containing protein 4 (408 aa).

Residues 4–77 (LKRKRKSNFS…EVKRRYLDWR (74 aa)) form the Myb-like domain. A coiled-coil region spans residues 236–367 (HLLVTLEKQK…IEKERLQDAL (132 aa)).

The polypeptide is Myb/SANT-like DNA-binding domain-containing protein 4 (msantd4) (Xenopus tropicalis (Western clawed frog)).